We begin with the raw amino-acid sequence, 2919 residues long: RNA-directed RNA polymerase L (2919 aa).

Residues 86-675 (SLMKQLDPND…DNDINLDSAT (590 aa)) form an endonuclease region. Positions 535, 567, and 585 each coordinate Mn(2+). Residue K604 is the For endonuclease activity of the active site. A RdRp catalytic domain is found at 1472-1671 (ARKTLKNEYM…SWFRKKEKLG (200 aa)). Position 1636 (D1636) interacts with Mg(2+). The cap-binding stretch occupies residues 2494–2632 (RVGKLGILGS…PLYWNPSLST (139 aa)).

This sequence belongs to the Bunyavirales RNA polymerase family. Homomultimer. Interacts with glycoprotein N; this interaction allows efficient polymerase packaging into virus particles. Interacts with nucleoprotein N. Mn(2+) serves as cofactor. It depends on Mg(2+) as a cofactor.

It is found in the host Golgi apparatus. Its subcellular location is the host endoplasmic reticulum. It localises to the host endoplasmic reticulum-Golgi intermediate compartment. The protein localises to the virion. It carries out the reaction RNA(n) + a ribonucleoside 5'-triphosphate = RNA(n+1) + diphosphate. In terms of biological role, RNA-dependent RNA polymerase, which is responsible for the replication and transcription of the viral RNA genome using antigenomic RNA as an intermediate. During transcription, synthesizes subgenomic RNAs and assures their capping by a cap-snatching mechanism, which involves the endonuclease activity cleaving the host capped pre-mRNAs. These short capped RNAs are then used as primers for viral transcription. The 3'-end of subgenomic mRNAs molecules are not polyadenylated. During replication, the polymerase binds the 5' and 3' vRNA extremities at distinct sites. In turn, significant conformational changes occur in the polymerase and in vRNA to initiate active RNA synthesis. As a consequence of the use of the same enzyme for both transcription and replication, these mechanisms need to be well coordinated. The protein is RNA-directed RNA polymerase L of Avena sativa (Oat).